The chain runs to 150 residues: L-alanine exporter AlaE (150 aa).

The next 4 membrane-spanning stretches (helical) occupy residues 17–37, 48–68, 86–106, and 111–131; these read FAMVVFCFVTGMIIEIFVSGM, LSIPVNIAIAWPYGVFRDYVL, LVAYVLFQSPVYAAILFTVGA, and IITAVATNALVSCGMGVLYGY.

The protein belongs to the AlaE exporter family.

It localises to the cell inner membrane. Exports L-alanine. In Vibrio cholerae serotype O1 (strain ATCC 39315 / El Tor Inaba N16961), this protein is L-alanine exporter AlaE.